Reading from the N-terminus, the 342-residue chain is Heat-inducible transcription repressor HrcA (342 aa).

This sequence belongs to the HrcA family.

Negative regulator of class I heat shock genes (grpE-dnaK-dnaJ and groELS operons). Prevents heat-shock induction of these operons. The sequence is that of Heat-inducible transcription repressor HrcA from Onion yellows phytoplasma (strain OY-M).